A 337-amino-acid chain; its full sequence is Probable dihydroorotase (337 aa).

Histidine 12, histidine 14, lysine 95, histidine 132, histidine 170, and aspartate 240 together coordinate Zn(2+). N6-carboxylysine is present on lysine 95.

It belongs to the metallo-dependent hydrolases superfamily. DHOase family. Class II DHOase subfamily. The cofactor is Zn(2+).

It carries out the reaction (S)-dihydroorotate + H2O = N-carbamoyl-L-aspartate + H(+). It participates in pyrimidine metabolism; UMP biosynthesis via de novo pathway; (S)-dihydroorotate from bicarbonate: step 3/3. The chain is Probable dihydroorotase (ura2) from Schizosaccharomyces pombe (strain 972 / ATCC 24843) (Fission yeast).